A 743-amino-acid chain; its full sequence is Protein STB5 (743 aa).

The zn(2)-C6 fungal-type DNA-binding region spans 22 to 49; sequence CARCRKLKKKCGKQIPTCANCDKNGAHC. Disordered regions lie at residues 81–100 and 155–249; these read VGKS…PLSA and NSNP…YANN. Composition is skewed to polar residues over residues 85-99 and 155-198; these read PLST…SPLS and NSNP…SPLI. Positions 213–238 are enriched in low complexity; sequence NNNRNTSNGDNGSNVNHDNNNGSTNT. Residues 239–249 show a composition bias toward polar residues; it reads PQLSLTPYANN.

The protein localises to the nucleus. Binds to SIN3. This is Protein STB5 (STB5) from Saccharomyces cerevisiae (strain ATCC 204508 / S288c) (Baker's yeast).